A 601-amino-acid chain; its full sequence is Aspartate--tRNA(Asp/Asn) ligase (601 aa).

Glu-174 is an L-aspartate binding site. Residues 198-201 (QLFK) form an aspartate region. Position 220 (Arg-220) interacts with L-aspartate. ATP is bound by residues 220 to 222 (RDE) and Gln-229. Position 459 (His-459) interacts with L-aspartate. Glu-493 is a binding site for ATP. Arg-500 contacts L-aspartate. 545–548 (GLDR) contacts ATP.

The protein belongs to the class-II aminoacyl-tRNA synthetase family. Type 1 subfamily. As to quaternary structure, homodimer.

Its subcellular location is the cytoplasm. It catalyses the reaction tRNA(Asx) + L-aspartate + ATP = L-aspartyl-tRNA(Asx) + AMP + diphosphate. Functionally, aspartyl-tRNA synthetase with relaxed tRNA specificity since it is able to aspartylate not only its cognate tRNA(Asp) but also tRNA(Asn). Reaction proceeds in two steps: L-aspartate is first activated by ATP to form Asp-AMP and then transferred to the acceptor end of tRNA(Asp/Asn). The protein is Aspartate--tRNA(Asp/Asn) ligase of Variovorax paradoxus (strain S110).